The following is a 207-amino-acid chain: Outer-membrane lipoprotein LolB (207 aa).

The signal sequence occupies residues 1–21 (MPLPDFRLIRLLPLASLVLTA). The N-palmitoyl cysteine moiety is linked to residue Cys22. The S-diacylglycerol cysteine moiety is linked to residue Cys22.

This sequence belongs to the LolB family. Monomer.

The protein localises to the cell outer membrane. Functionally, plays a critical role in the incorporation of lipoproteins in the outer membrane after they are released by the LolA protein. The sequence is that of Outer-membrane lipoprotein LolB from Escherichia fergusonii (strain ATCC 35469 / DSM 13698 / CCUG 18766 / IAM 14443 / JCM 21226 / LMG 7866 / NBRC 102419 / NCTC 12128 / CDC 0568-73).